We begin with the raw amino-acid sequence, 570 residues long: Auxin efflux carrier component 6 (570 aa).

Over 1–6 the chain is Extracellular; sequence MITGNE. The helical transmembrane segment at 7 to 27 threads the bilayer; the sequence is FYTVMCAMAPLYFAMFVAYGS. Over 28–38 the chain is Cytoplasmic; the sequence is VKWCKIFTPAQ. A helical membrane pass occupies residues 39-59; sequence CSGINRFVSVFAVPVLSFHFI. A (indol-3-yl)acetate-binding site is contributed by valine 51. The Extracellular portion of the chain corresponds to 60–70; the sequence is SQNNPYKMDTM. The chain crosses the membrane as a helical span at residues 71–91; the sequence is FILADTLSKIFVFVLLSLWAV. Residues 92–100 are Cytoplasmic-facing; sequence FFKAGGLDW. A helical membrane pass occupies residues 101–121; sequence LITLFSIATLPNTLVMGIPLL. (indol-3-yl)acetate is bound by residues asparagine 112 and leucine 114. The Extracellular segment spans residues 122–131; sequence QAMYGDYTQT. The helical transmembrane segment at 132 to 152 threads the bilayer; the sequence is LMVQLVVLQCIIWYTLLLFLF. Tyrosine 145 is a binding site for (indol-3-yl)acetate. Topologically, residues 153–430 are cytoplasmic; that stretch reads ELRAARLLIR…LSRNPNTYSS (278 aa). Phosphoserine is present on residues serine 230 and serine 308. The chain crosses the membrane as a helical span at residues 431 to 451; sequence LLGLVWSLISFKWNIPMPNIV. Topologically, residues 452–454 are extracellular; sequence DFS. A helical membrane pass occupies residues 455–475; that stretch reads IKIISDAGLGMAMFSLGLFMA. Residues 476–491 lie on the Cytoplasmic side of the membrane; sequence LQPKMIPCGAKKATMG. A helical membrane pass occupies residues 492–512; the sequence is MLIRFISGPLFMAGASLLVGL. Residues 513-515 lie on the Extracellular side of the membrane; sequence RGS. Residues 516–536 traverse the membrane as a helical segment; sequence RLHAAIVQAALPQGIVPFVFA. 2 residues coordinate (indol-3-yl)acetate: isoleucine 530 and valine 531. Topologically, residues 537–549 are cytoplasmic; sequence REYNLHPDLLSTL. A helical transmembrane segment spans residues 550–570; sequence VIFGMIVSLPVTILYYVLLGL.

This sequence belongs to the auxin efflux carrier (TC 2.A.69.1) family. Homodimer. Expressed in the vasculature of the primary root, cotyledons, floral stem, sepals and the main transmitting tract of the reproductive silique. Expressed in embryos, shoot meristem, root tip and lateral root meristems. Expressed in the nectaries and the floral organ boundaries of the anthers. Detected in pollen. Expressed in broad subepidermal domains that narrowed to sites of vein formation. Expressed in veins of mature leaves.

It localises to the endoplasmic reticulum membrane. Functionally, component of the intracellular auxin-transport pathway. Regulates auxin transport and auxin homeostasis. Directly involved in the regulation of nectar production. Involved in unfolded protein response (UPR) activation. Involved in the control of vein patterning. Redundantly with PIN8, inhibits the vein-formation-promoting functions of PIN5. PIN5, PIN6, and PIN8 control vein network geometry, but they are expressed in mutually exclusive domains of leaf vascular cells. This chain is Auxin efflux carrier component 6, found in Arabidopsis thaliana (Mouse-ear cress).